The sequence spans 1402 residues: Erbin (1402 aa).

LRR repeat units follow at residues 23 to 44 (TVTT…IFTF), 47 to 68 (TLEE…LFNC), 70 to 91 (SLHK…IANL), 93 to 114 (NLRE…IKNC), 116 to 137 (VLTI…FSQL), 139 to 161 (NLTQ…GRLT), 162 to 183 (KLQI…MNRL), 185 to 206 (QLER…LEQL), 208 to 229 (GLRE…IGSL), 231 to 252 (QLTY…ISTC), 254 to 275 (NLQD…IGSL), 277 to 298 (NVTT…IGGL), 300 to 321 (SIEE…IGQL), 323 to 344 (NMRT…IGNW), 346 to 367 (NITV…MGDM), 369 to 391 (KLKV…TKLQ), and 392 to 413 (QLTA…QKET). Phosphoserine is present on residues Ser440 and Ser444. 2 disordered regions span residues 465–489 (DEDK…PYPD) and 507–543 (DEET…TTKS). Over residues 470–480 (EREAPPREGNL) the composition is skewed to basic and acidic residues. Tyr483 is modified (phosphotyrosine). The residue at position 485 (Thr485) is a Phosphothreonine. Residues 507–534 (DEETNEESGRDLKQHEDQQVVNKDKCVK) are compositionally biased toward basic and acidic residues. Phosphoserine is present on residues Ser595, Ser599, Ser600, and Ser617. Residues 629–638 (NKKDDAKDAD) show a composition bias toward basic and acidic residues. The interval 629 to 694 (NKKDDAKDAD…PVDSNSKVRQ (66 aa)) is disordered. A compositionally biased stretch (low complexity) spans 647 to 659 (NSNQNNSNCSSPS). Over residues 660–689 (RMSDSVSLNTDSSQDTSLCSPVKQTPVDSN) the composition is skewed to polar residues. 4 positions are modified to phosphoserine: Ser712, Ser849, Ser854, and Ser869. Residues 824 to 864 (EDTAPSPGRVEPQKASSSADVGISKSTEDLSPQRSGPTGAV) are disordered. Position 914 is a phosphothreonine (Thr914). At Tyr917 the chain carries Phosphotyrosine. At Ser928 the chain carries Phosphoserine. Tyr970 carries the post-translational modification Phosphotyrosine. 2 disordered regions span residues 990–1018 (WHPK…ENHS) and 1070–1093 (TTIQ…TRRT). Residues 1070–1084 (TTIQRQSSVSSTASV) are compositionally biased toward polar residues. At Tyr1097 the chain carries Phosphotyrosine. Disordered regions lie at residues 1107–1187 (GRTP…VPHD), 1198–1217 (AKKL…CQDD), and 1222–1274 (EEQN…VARH). Composition is skewed to polar residues over residues 1128-1139 (GPNTSRPQSARP) and 1149-1164 (MSVS…PSKR). Phosphoserine occurs at positions 1150 and 1171. Residues Leu1231, Arg1234, and Ser1276 each carry the phosphoserine modification. The PDZ domain occupies 1311-1400 (EIRVRVEKDP…AVDLIIVREV (90 aa)).

Belongs to the LAP (LRR and PDZ) protein family. As to quaternary structure, interacts with ERBB2, BPAG1 and ITGB4. May favor the localization of ERBB2, by restricting its presence to the basolateral membrane of epithelial cells. Also found to interact with ARVCF and delta catenin. Interacts (via C-terminus) with DST (via N-terminus). Interacts with NOD2 (via CARD domain). Isoform 2 is phosphorylated on Ser-1231 and Ser-1234.

Its subcellular location is the cell junction. The protein resides in the hemidesmosome. It localises to the nucleus membrane. The protein localises to the basolateral cell membrane. Acts as an adapter for the receptor ERBB2, in epithelia. By binding the unphosphorylated ERBB2 'Tyr-1248' receptor, it may contribute to stabilize this unphosphorylated state. Inhibits NOD2-dependent NF-kappa-B signaling and pro-inflammatory cytokine secretion. The protein is Erbin of Mus musculus (Mouse).